A 339-amino-acid chain; its full sequence is Deubiquitinase and deneddylase Dub2 (339 aa).

The helical transmembrane segment at 36–56 (IIIALFLIVISCGLILCAYTF) threads the bilayer. Catalysis depends on residues His203, Asp220, and Cys282.

It belongs to the peptidase C48 family.

Its subcellular location is the secreted. It localises to the host cell. It is found in the membrane. Functionally, effector proteins function to alter host cell physiology and promote bacterial survival in host tissues. This protease possesses deubiquitinating and deneddylating activities. The polypeptide is Deubiquitinase and deneddylase Dub2 (cdu2) (Chlamydia trachomatis serovar D (strain ATCC VR-885 / DSM 19411 / UW-3/Cx)).